We begin with the raw amino-acid sequence, 334 residues long: Protein SCO1 homolog 1, mitochondrial (334 aa).

The transit peptide at 1–13 (MASALCRTASRLR) directs the protein to the mitochondrion. The interval 74–120 (SASDTTSKHDSGKPETKSSEKNEKSGGSESSDGGSDHKNERASGKDV) is disordered. Composition is skewed to basic and acidic residues over residues 79 to 99 (TSKH…EKSG) and 107 to 120 (GSDH…GKDV). A helical transmembrane segment spans residues 125 to 144 (VSWMSFFLLFATGAGLVYYY). Residues 166–331 (PSAGKAAIGG…TDGVVKEIRQ (166 aa)) enclose the Thioredoxin domain. Cu cation-binding residues include Cys-206, Cys-210, and His-295.

It belongs to the SCO1/2 family. In terms of tissue distribution, expressed in the whole plant with highest expression in imbibed seeds, embryos, endosperm, and root tips.

It localises to the mitochondrion inner membrane. Its function is as follows. Thought to play a role in cellular copper homeostasis, mitochondrial redox signaling or insertion of copper into the active site of COX. Plays an essential role in embryo development. In Arabidopsis thaliana (Mouse-ear cress), this protein is Protein SCO1 homolog 1, mitochondrial (HCC1).